The chain runs to 497 residues: Delayed-rectifier potassium channel regulatory subunit KCNS1 (497 aa).

Over 1–186 the chain is Cytoplasmic; it reads MVSEFPGPGS…LTMENPGYSL (186 aa). The helical transmembrane segment at 187-208 threads the bilayer; sequence PSKLFSCVSIGVVLASIAAMCI. Over 209–239 the chain is Extracellular; that stretch reads HSLPEYQAREAAAAVAAVAAGRSAEDVRDDP. Residues 240-262 form a helical membrane-spanning segment; it reads VLRRLEYFCIAWFSFEVSSRLLL. The Cytoplasmic portion of the chain corresponds to 263 to 273; the sequence is APSTRNFFCHP. A helical membrane pass occupies residues 274–291; the sequence is LNLIDIVSVLPFYLTLLA. Over 292–309 the chain is Extracellular; it reads GAALGDRRGASGEELGDL. The helical; Voltage-sensor transmembrane segment at 310–330 threads the bilayer; that stretch reads GKVVQVFRLMRIFRVLKLARH. Over 331-345 the chain is Cytoplasmic; that stretch reads STGLRSLGATLKHSY. Residues 346–367 traverse the membrane as a helical segment; the sequence is REVGILLLYLAVGVSVFSGVAY. At 368–379 the chain is on the extracellular side; that stretch reads TAEEKNVGFDTI. Residues 380–391 constitute an intramembrane region (helical); it reads PACWWWGTVSMT. The Selectivity filter signature appears at 392–397; that stretch reads TVGYGD. Residues 392 to 399 lie within the membrane without spanning it; it reads TVGYGDVV. At 400 to 406 the chain is on the extracellular side; sequence PETVAGK. The chain crosses the membrane as a helical span at residues 407 to 435; that stretch reads LAASGCILGGILVVALPITIIFNKFSHFY. Over 436–497 the chain is Cytoplasmic; sequence RRQKALEAAV…PSEPAKSHSY (62 aa). The interval 464–497 is disordered; the sequence is SDVSLETSRETSQEGRSTDLETQAPSEPAKSHSY. Positions 470–482 are enriched in basic and acidic residues; that stretch reads TSRETSQEGRSTD.

The protein belongs to the potassium channel family. S (TC 1.A.1.2) subfamily. Kv9.1/KCNS1 sub-subfamily. As to quaternary structure, heterotetramer with KCNB1. Heterotetramer with KCNB2. Does not form homomultimers. As to expression, highly expressed in brain, but not in the other tissues tested.

The protein localises to the cell membrane. Functionally, potassium channel regulatory subunit that modulate the delayed rectifier voltage-gated potassium channel activity of KCNB1 and KCNB2 by altering their kinetics, expression levels, and shifting the half-inactivation potential to more polarized values. While it does not form functional channels on its own, it can form functional heterotetrameric channels with KCNB1 and KCNB2. Each regulatory subunit has unique regulatory properties that can lead to extensive inhibition, significant changes in kinetics, and/or substantial shifts in the voltage dependencies of the inactivation process. The chain is Delayed-rectifier potassium channel regulatory subunit KCNS1 from Rattus norvegicus (Rat).